The chain runs to 206 residues: Oligoribonuclease (206 aa).

One can recognise an Exonuclease domain in the interval 20 to 183 (LVWLDMEMTG…ADIHESIDEL (164 aa)). Tyr141 is an active-site residue.

The protein belongs to the oligoribonuclease family.

Its subcellular location is the cytoplasm. In terms of biological role, 3'-to-5' exoribonuclease specific for small oligoribonucleotides. The protein is Oligoribonuclease of Burkholderia lata (strain ATCC 17760 / DSM 23089 / LMG 22485 / NCIMB 9086 / R18194 / 383).